The chain runs to 172 residues: uncharacterized protein (172 aa).

A compositionally biased stretch (basic and acidic residues) spans 1 to 17 (MISLDKDENEIEHHNEE). Residues 1-27 (MISLDKDENEIEHHNEENSLVEQETAP) are disordered. A helical transmembrane segment spans residues 129-151 (IVTVLIGIIVAIFVLVVIGIAAF).

It is found in the membrane. This is an uncharacterized protein from Bacillus subtilis (strain 168).